The sequence spans 124 residues: Small ribosomal subunit protein uS12 (124 aa).

Residues 1 to 25 (MATINQLVRKPRQASTYKSASPALD) form a disordered region.

This sequence belongs to the universal ribosomal protein uS12 family. Part of the 30S ribosomal subunit. Contacts proteins S8 and S17. May interact with IF1 in the 30S initiation complex.

With S4 and S5 plays an important role in translational accuracy. Functionally, interacts with and stabilizes bases of the 16S rRNA that are involved in tRNA selection in the A site and with the mRNA backbone. Located at the interface of the 30S and 50S subunits, it traverses the body of the 30S subunit contacting proteins on the other side and probably holding the rRNA structure together. The combined cluster of proteins S8, S12 and S17 appears to hold together the shoulder and platform of the 30S subunit. This chain is Small ribosomal subunit protein uS12, found in Xylella fastidiosa (strain 9a5c).